The primary structure comprises 523 residues: Translation initiation factor eIF2B subunit delta (523 aa).

Residues methionine 1–tyrosine 147 form a disordered region. Alanine 2 bears the N-acetylalanine mark. Serine 12 bears the Phosphoserine mark. The segment covering glutamate 30–arginine 40 has biased composition (basic and acidic residues). Positions lysine 41–lysine 51 are enriched in basic residues. The residue at position 86 (threonine 86) is a Phosphothreonine. Over residues proline 87–glutamate 121 the composition is skewed to basic and acidic residues. Serine 130 bears the Phosphoserine mark. Residues arginine 170–leucine 179 form a may bind the chemical integrated stress response (ISR) inhibitor ISRIB region.

It belongs to the eIF-2B alpha/beta/delta subunits family. As to quaternary structure, component of the translation initiation factor 2B (eIF2B) complex which is a heterodecamer of two sets of five different subunits: alpha, beta, gamma, delta and epsilon. Subunits alpha, beta and delta comprise a regulatory subcomplex and subunits epsilon and gamma comprise a catalytic subcomplex. Within the complex, the hexameric regulatory complex resides at the center, with the two heterodimeric catalytic subcomplexes bound on opposite sides.

The protein resides in the cytoplasm. Its subcellular location is the cytosol. With respect to regulation, activated by the chemical integrated stress response (ISR) inhibitor ISRIB which stimulates guanine nucleotide exchange factor activity for both phosphorylated and unphosphorylated eIF2. Its function is as follows. Acts as a component of the translation initiation factor 2B (eIF2B) complex, which catalyzes the exchange of GDP for GTP on eukaryotic initiation factor 2 (eIF2) gamma subunit. Its guanine nucleotide exchange factor activity is repressed when bound to eIF2 complex phosphorylated on the alpha subunit, thereby limiting the amount of methionyl-initiator methionine tRNA available to the ribosome and consequently global translation is repressed. This chain is Translation initiation factor eIF2B subunit delta (EIF2B4), found in Homo sapiens (Human).